The chain runs to 245 residues: 1-(5-phosphoribosyl)-5-[(5-phosphoribosylamino)methylideneamino] imidazole-4-carboxamide isomerase (245 aa).

Residue aspartate 7 is the Proton acceptor of the active site. The Proton donor role is filled by aspartate 129.

This sequence belongs to the HisA/HisF family.

Its subcellular location is the cytoplasm. It carries out the reaction 1-(5-phospho-beta-D-ribosyl)-5-[(5-phospho-beta-D-ribosylamino)methylideneamino]imidazole-4-carboxamide = 5-[(5-phospho-1-deoxy-D-ribulos-1-ylimino)methylamino]-1-(5-phospho-beta-D-ribosyl)imidazole-4-carboxamide. Its pathway is amino-acid biosynthesis; L-histidine biosynthesis; L-histidine from 5-phospho-alpha-D-ribose 1-diphosphate: step 4/9. The polypeptide is 1-(5-phosphoribosyl)-5-[(5-phosphoribosylamino)methylideneamino] imidazole-4-carboxamide isomerase (Shewanella baltica (strain OS155 / ATCC BAA-1091)).